The following is a 229-amino-acid chain: Cytidylate kinase (229 aa).

10–18 (GPAGSGKST) contributes to the ATP binding site.

It belongs to the cytidylate kinase family. Type 1 subfamily.

It localises to the cytoplasm. The enzyme catalyses CMP + ATP = CDP + ADP. The catalysed reaction is dCMP + ATP = dCDP + ADP. In Leptospira interrogans serogroup Icterohaemorrhagiae serovar Lai (strain 56601), this protein is Cytidylate kinase.